Consider the following 293-residue polypeptide: MTENNDIKMVIITGMSGAGKTVALQSFEDLGYFCVDNLPPMLLPKFIELMADSKGKMNKVALGIDLRGREFFEHLWGALDDLSERTWIIPHILFLDAKDSTLVTRYKETRRSHPLAPTGLPLKGIEAERNLLTDMKARANIVLDTSDLKPKELREKIVHLFSTETEQAFRVNVMSFGFKYGIPIDADLVFDVRFLPNPYYIPHMKPLTGLDEEVSSYVLKFNETHKFLEKLTDLITFMLPHYKREGKSQLVIAIGCTGGQHRSVTLTEYLGKHLKPEYSVHVSHRDVEKRKGH.

An ATP-binding site is contributed by 14–21; it reads GMSGAGKT. 65–68 is a GTP binding site; that stretch reads DLRG.

Belongs to the RapZ-like family.

In terms of biological role, displays ATPase and GTPase activities. The polypeptide is Nucleotide-binding protein BC_5156 (Bacillus cereus (strain ATCC 14579 / DSM 31 / CCUG 7414 / JCM 2152 / NBRC 15305 / NCIMB 9373 / NCTC 2599 / NRRL B-3711)).